Reading from the N-terminus, the 459-residue chain is Argininosuccinate lyase (459 aa).

This sequence belongs to the lyase 1 family. Argininosuccinate lyase subfamily.

The protein resides in the cytoplasm. The catalysed reaction is 2-(N(omega)-L-arginino)succinate = fumarate + L-arginine. Its pathway is amino-acid biosynthesis; L-arginine biosynthesis; L-arginine from L-ornithine and carbamoyl phosphate: step 3/3. This Prochlorococcus marinus (strain AS9601) protein is Argininosuccinate lyase.